Consider the following 310-residue polypeptide: Glutaminase (310 aa).

Residues S66, N117, E161, N168, Y192, Y244, and V262 each coordinate substrate.

It belongs to the glutaminase family. In terms of assembly, homotetramer.

The catalysed reaction is L-glutamine + H2O = L-glutamate + NH4(+). The sequence is that of Glutaminase from Desulfovibrio desulfuricans (strain ATCC 27774 / DSM 6949 / MB).